Here is a 149-residue protein sequence, read N- to C-terminus: Ribonuclease pancreatic (149 aa).

Positions 1–25 (MGLEKSLILFPLLVLVLGWVQPSLA) are cleaved as a signal peptide. Substrate-binding residues include Lys32 and Arg35. His37 functions as the Proton acceptor in the catalytic mechanism. Disulfide bonds link Cys51–Cys109, Cys65–Cys120, Cys83–Cys135, and Cys90–Cys97. Substrate contacts are provided by residues 66-70 (KPVNT), Lys91, and Arg110. His144 (proton donor) is an active-site residue.

It belongs to the pancreatic ribonuclease family. As to quaternary structure, monomer. Interacts with and forms tight 1:1 complexes with RNH1. Dimerization of two such complexes may occur. Interaction with RNH1 inhibits this protein. Pancreas.

It is found in the secreted. The catalysed reaction is an [RNA] containing cytidine + H2O = an [RNA]-3'-cytidine-3'-phosphate + a 5'-hydroxy-ribonucleotide-3'-[RNA].. It catalyses the reaction an [RNA] containing uridine + H2O = an [RNA]-3'-uridine-3'-phosphate + a 5'-hydroxy-ribonucleotide-3'-[RNA].. Functionally, endonuclease that catalyzes the cleavage of RNA on the 3' side of pyrimidine nucleotides. Acts on single-stranded and double-stranded RNA. This is Ribonuclease pancreatic (RNASE1) from Uranomys ruddi (White-bellied brush-furred rat).